The following is a 30-amino-acid chain: Ribosome-inactivating protein momorcochin-S (30 aa).

Belongs to the ribosome-inactivating protein family. Type 1 RIP subfamily. Glycosylated.

It catalyses the reaction Endohydrolysis of the N-glycosidic bond at one specific adenosine on the 28S rRNA.. Functionally, inactivates eukaryotic 60S ribosomal subunits. The chain is Ribosome-inactivating protein momorcochin-S from Momordica cochinchinensis (Spiny bitter cucumber).